Reading from the N-terminus, the 105-residue chain is Thioredoxin (105 aa).

Residues 1-105 form the Thioredoxin domain; sequence MASNVTDKSF…SLIEWINNNI (105 aa). An intrachain disulfide couples Cys30 to Cys33.

This sequence belongs to the thioredoxin family.

Component of the thioredoxin-thioredoxin reductase system. Participates in various redox reactions through the reversible oxidation of its active center dithiol to a disulfide and catalyzes dithiol-disulfide exchange reactions. The polypeptide is Thioredoxin (trxA) (Rickettsia bellii (strain RML369-C)).